Here is a 698-residue protein sequence, read N- to C-terminus: Polyribonucleotide nucleotidyltransferase (698 aa).

Residues D485 and D491 each coordinate Mg(2+). The KH domain occupies 552 to 611 (PRIHTIKINTDKIRDVIGKGGAVIRSLCEETGTTIEIEDDGTVKIAATSGEQADDAINRI). The S1 motif domain maps to 621–689 (GTIYTGKVVR…RQGRVRLSIK (69 aa)).

The protein belongs to the polyribonucleotide nucleotidyltransferase family. Component of the RNA degradosome, which is a multiprotein complex involved in RNA processing and mRNA degradation. The cofactor is Mg(2+).

It is found in the cytoplasm. The catalysed reaction is RNA(n+1) + phosphate = RNA(n) + a ribonucleoside 5'-diphosphate. Functionally, involved in mRNA degradation. Catalyzes the phosphorolysis of single-stranded polyribonucleotides processively in the 3'- to 5'-direction. In Psychromonas ingrahamii (strain DSM 17664 / CCUG 51855 / 37), this protein is Polyribonucleotide nucleotidyltransferase.